The primary structure comprises 73 residues: Salivary thrombin inhibitor XC-42 (73 aa).

A signal peptide spans 1–23; sequence MKLQFLFIFIAFCVMLFAQIATA.

In terms of assembly, interacts with human F2 (thrombin). In terms of tissue distribution, salivary gland (at protein level).

Its subcellular location is the secreted. Its function is as follows. Acts as a competitive inhibitor of host thrombin. This Xenopsylla cheopis (Oriental rat flea) protein is Salivary thrombin inhibitor XC-42.